Consider the following 764-residue polypeptide: MKMLRALLLCLSLVFFLAFQIVVSEIQLGSKLVVGENTLWVSNNGDFALGFFNPPGLLNRFSIGIWFNSNSIPYDQRKVVWVAGAGVVVSDNSSYFELTRNGELVLFDSLLGVPVWNSKTNRFSVSSALLRDDGNLVLLKDREEIVWQSFGTPTDTLLPNQKFPAFEMLRAASENSRSSYYSLHLEDSGRLELRWESNITFWSSGNEVVKKKKKKKNIGAVLTSEGALFLEDQDLMRPVWSVFGEDHNDTVKFRFLRLDRDGNLRMYSWNEDSRIWKPVWQAVENQCRVFATCGSQVCSFNSSGYTECNCPFNAFVSVSDPKCLVPYQKPGCKSGFNMVKFKNLELYGIYPANDSVISQISSQRCKKLCLENSACTAVTYTNDGEPQCRMKLTRYISGYSDPSLSSISYVKTCLDPIAVDPNNVSKESPVTVTKSHSICIPCLVGATSTTLVLFLGFQLGIVVYIYRRKKKLAKKKAERFSKATNPKGVMIFSVDEIKAMTDNFDNNIGPQIFKGVMPENELVAVKEVEATLTEERKFRSSASKIGTMHHKNLANLEGYCCELGRRFLVYEYAKNGSILDHIVDPLRSKKLTWRIRTDTCLSVAKALCYLHMECREFVSHGNLNCGNILLGEDLEAKLTEYGFGLCAADKDVEDFGKTVLALITGRYEPEGVVSEWVYREWIGGRKETVVDKGLEGCFDVEELERVLRISFWCVQTDERLRPSMGEVVKVLEGTLSVDPPPPPFACARSSPTNSSESSQSLYEP.

The first 24 residues, 1 to 24 (MKMLRALLLCLSLVFFLAFQIVVS), serve as a signal peptide directing secretion. Bulb-type lectin domains follow at residues 25-151 (EIQL…QSFG) and 154-279 (TDTL…WKPV). Residues 25–442 (EIQLGSKLVV…TKSHSICIPC (418 aa)) are Extracellular-facing. Asparagine 92, asparagine 198, and asparagine 248 each carry an N-linked (GlcNAc...) asparagine glycan. The EGF-like; atypical domain occupies 283–320 (VENQCRVFATCGSQVCSFNSSGYTECNCPFNAFVSVSD). 5 disulfides stabilise this stretch: cysteine 287-cysteine 298, cysteine 293-cysteine 308, cysteine 332-cysteine 413, cysteine 365-cysteine 388, and cysteine 369-cysteine 375. N-linked (GlcNAc...) asparagine glycosylation is found at asparagine 301 and asparagine 353. The Apple domain maps to 332–413 (CKSGFNMVKF…LSSISYVKTC (82 aa)). A glycan (N-linked (GlcNAc...) asparagine) is linked at asparagine 423. The helical transmembrane segment at 443 to 463 (LVGATSTTLVLFLGFQLGIVV) threads the bilayer. Topologically, residues 464–764 (YIYRRKKKLA…SESSQSLYEP (301 aa)) are cytoplasmic. The region spanning 466 to 764 (YRRKKKLAKK…SESSQSLYEP (299 aa)) is the Protein kinase domain. Residues 508-516 (IGPQIFKGV) and lysine 526 contribute to the ATP site. Positions 586 to 603 (LRSKKLTWRIRTDTCLSV) are caM-binding. The tract at residues 738–764 (DPPPPPFACARSSPTNSSESSQSLYEP) is disordered. The span at 749-764 (SSPTNSSESSQSLYEP) shows a compositional bias: low complexity.

The protein resides in the cell membrane. The enzyme catalyses L-seryl-[protein] + ATP = O-phospho-L-seryl-[protein] + ADP + H(+). It catalyses the reaction L-threonyl-[protein] + ATP = O-phospho-L-threonyl-[protein] + ADP + H(+). This Arabidopsis thaliana (Mouse-ear cress) protein is G-type lectin S-receptor-like serine/threonine-protein kinase SD3-1 (SD31).